The chain runs to 463 residues: Elongation factor 1-alpha (463 aa).

G2 carries the n,N,N-trimethylglycine modification. Position 3 is an N6,N6-dimethyllysine; alternate (K3). Position 3 is an N6-methyllysine; alternate (K3). The region spanning 5 to 239 is the tr-type G domain; sequence KNHVNVVVIG…DAIEPPSRPT (235 aa). The segment at 14 to 21 is G1; sequence GHVDSGKS. Residue 14-21 coordinates GTP; it reads GHVDSGKS. The residue at position 30 (K30) is an N6-methyllysine. Residues 70 to 74 are G2; the sequence is GITID. At K79 the chain carries N6,N6,N6-trimethyllysine. The G3 stretch occupies residues 91-94; it reads DAPG. GTP contacts are provided by residues 91 to 95 and 153 to 156; these read DAPGH and NKMD. Residues 153–156 are G4; that stretch reads NKMD. A G5 region spans residues 191 to 193; the sequence is SGW. K315 bears the N6,N6-dimethyllysine; alternate mark. K315 carries the post-translational modification N6-methyllysine; alternate. K389 carries the N6-methyllysine modification.

This sequence belongs to the TRAFAC class translation factor GTPase superfamily. Classic translation factor GTPase family. EF-Tu/EF-1A subfamily.

The protein resides in the cytoplasm. Its function is as follows. This protein promotes the GTP-dependent binding of aminoacyl-tRNA to the A-site of ribosomes during protein biosynthesis. This Puccinia graminis (Black stem rust fungus) protein is Elongation factor 1-alpha (TEF).